We begin with the raw amino-acid sequence, 202 residues long: LexA repressor (202 aa).

Positions 28–48 (RAEIAQRLGFRSPNAAEEHLK) form a DNA-binding region, H-T-H motif. Catalysis depends on for autocatalytic cleavage activity residues S119 and K156.

The protein belongs to the peptidase S24 family. In terms of assembly, homodimer.

The enzyme catalyses Hydrolysis of Ala-|-Gly bond in repressor LexA.. Represses a number of genes involved in the response to DNA damage (SOS response), including recA and lexA. Binds to the 16 bp palindromic sequence 5'-CTGTATATATATACAG-3'. In the presence of single-stranded DNA, RecA interacts with LexA causing an autocatalytic cleavage which disrupts the DNA-binding part of LexA, leading to derepression of the SOS regulon and eventually DNA repair. This chain is LexA repressor, found in Edwardsiella ictaluri (strain 93-146).